The chain runs to 494 residues: MKEFHLLLFHGGSIFPECILILGLILLLMIDLTSDQKDTPWFYFISLTSLVMSITVLLFRWREEPMISFLGNFQTSNFSKIFRFLILLCSTLCIPLSVEYIKCTEMAITEFLLFLLTAALGGMVLCGANDLVTIFVALECFSLCSYLLSGYTKRDVRSNEATMKYLLMGGASSSILVYGFSWLYGLSGGEIELQEVVNGLINTQMYNSPGILIALISIAVGIGFKLSLVPFHQWTPDVYEGSPTPVVAFLSVTSKVAASALATRIFDLIFYFSSNEWHLLLEILAILSMILGNLIAITQTSMKRMLAYSSMGQIGYIIIGIIAGDSKNGYASMITYMLFYIFMNLGTFACIVLFGLRTGTDNIRDYAGLYTKDPFSAFSLALCLLSLGGIPPLAGFFGKLYLFWCGWQAGSYLLVSIGPLMSVISIYYYLKIIKLLMTERNKEITPHVQNYRRSPSSFISKNSIELSMIVCVTASTTLGIVMNPIIAIAQDTLF.

The next 13 helical transmembrane spans lie at 6–26 (LLLFHGGSIFPECILILGLIL), 39–59 (TPWFYFISLTSLVMSITVLLF), 81–101 (IFRFLILLCSTLCIPLSVEYI), 106–126 (MAITEFLLFLLTAALGGMVLC), 131–151 (LVTIFVALECFSLCSYLLSGY), 166–186 (LLMGGASSSILVYGFSWLYGL), 211–231 (ILIALISIAVGIGFKLSLVPF), 277–297 (WHLLLEILAILSMILGNLIAI), 305–325 (MLAYSSMGQIGYIIIGIIAGD), 336–356 (YMLFYIFMNLGTFACIVLFGL), 377–397 (AFSLALCLLSLGGIPPLAGFF), 413–433 (LLVSIGPLMSVISIYYYLKII), and 468–488 (MIVCVTASTTLGIVMNPIIAI).

It belongs to the complex I subunit 2 family. In terms of assembly, NDH is composed of at least 16 different subunits, 5 of which are encoded in the nucleus.

It is found in the plastid. The protein localises to the chloroplast thylakoid membrane. It carries out the reaction a plastoquinone + NADH + (n+1) H(+)(in) = a plastoquinol + NAD(+) + n H(+)(out). The catalysed reaction is a plastoquinone + NADPH + (n+1) H(+)(in) = a plastoquinol + NADP(+) + n H(+)(out). Functionally, NDH shuttles electrons from NAD(P)H:plastoquinone, via FMN and iron-sulfur (Fe-S) centers, to quinones in the photosynthetic chain and possibly in a chloroplast respiratory chain. The immediate electron acceptor for the enzyme in this species is believed to be plastoquinone. Couples the redox reaction to proton translocation, and thus conserves the redox energy in a proton gradient. The polypeptide is NAD(P)H-quinone oxidoreductase subunit 2 B, chloroplastic (Cycas taitungensis (Prince sago)).